The primary structure comprises 326 residues: Methionine import ATP-binding protein MetN (326 aa).

Residues 1–226 form the ABC transporter domain; it reads MVFYTIGPQT…PQQPITRQFV (226 aa). 23 to 30 is an ATP binding site; sequence GYSGAGKS.

This sequence belongs to the ABC transporter superfamily. Methionine importer (TC 3.A.1.24) family. In terms of assembly, the complex is composed of two ATP-binding proteins (MetN), two transmembrane proteins (MetI) and a solute-binding protein (MetQ).

Its subcellular location is the cell inner membrane. The catalysed reaction is L-methionine(out) + ATP + H2O = L-methionine(in) + ADP + phosphate + H(+). It carries out the reaction D-methionine(out) + ATP + H2O = D-methionine(in) + ADP + phosphate + H(+). Part of the ABC transporter complex MetNIQ involved in methionine import. Responsible for energy coupling to the transport system. This Erwinia pyrifoliae (strain DSM 12162 / Ep1/96) protein is Methionine import ATP-binding protein MetN.